The primary structure comprises 85 residues: Small ribosomal subunit protein bS18 (85 aa).

This sequence belongs to the bacterial ribosomal protein bS18 family. In terms of assembly, part of the 30S ribosomal subunit. Forms a tight heterodimer with protein bS6.

Functionally, binds as a heterodimer with protein bS6 to the central domain of the 16S rRNA, where it helps stabilize the platform of the 30S subunit. This Helicobacter pylori (strain Shi470) protein is Small ribosomal subunit protein bS18.